The following is a 569-amino-acid chain: Protein GPR108 (569 aa).

A signal peptide spans 1–34 (MAVSERRGLSGESPTQCRWGYLSLLVLTLSGCSG). N-linked (GlcNAc...) asparagine glycosylation is found at asparagine 59, asparagine 111, and asparagine 182. The tract at residues 144-219 (LLPEAPTQSG…DPSGKEKDQV (76 aa)) is disordered. Residues 180-192 (KENQTAPQVSGDK) are compositionally biased toward polar residues. Over residues 194-203 (TPGEHRHSSE) the composition is skewed to basic and acidic residues. 2 N-linked (GlcNAc...) asparagine glycosylation sites follow: asparagine 226 and asparagine 230. 7 helical membrane-spanning segments follow: residues 289–309 (LYLI…SVLC), 318–338 (IHWL…FHSI), 362–382 (LLKG…WAFV), 393–413 (IFGI…VIES), 427–447 (ILFL…VWSI), 475–495 (VMVI…QVAV), and 499–519 (WQWL…VLTG).

Belongs to the LU7TM family. High expression in spleen, lung, stomach, large and small intestine, and thymus.

The protein resides in the golgi apparatus. The protein localises to the cis-Golgi network membrane. It is found in the trans-Golgi network membrane. It localises to the golgi apparatus membrane. Functionally, may play a role in intracellular immune modulation by activating NF-kappaB response and attenuating Toll-like-receptor response. Its function is as follows. (Microbial infection) Plays an essential function in adeno-associated virus (AAV) transduction, across multiple serotypes except AAV5. May play a critical role in mediating the endosomal virus escape or in the AAV virions trafficking from endosomes to the nucleus. In Mus musculus (Mouse), this protein is Protein GPR108 (Gpr108).